Here is a 619-residue protein sequence, read N- to C-terminus: Chaperone protein HscA homolog (619 aa).

It belongs to the heat shock protein 70 family.

In terms of biological role, chaperone involved in the maturation of iron-sulfur cluster-containing proteins. Has a low intrinsic ATPase activity which is markedly stimulated by HscB. The chain is Chaperone protein HscA homolog from Acinetobacter baumannii (strain ATCC 17978 / DSM 105126 / CIP 53.77 / LMG 1025 / NCDC KC755 / 5377).